The sequence spans 1235 residues: MPPQSKSITYLPLLYNPFLNCIFNNPHHSKNPFRQTVQELSENHNDYTILVPPAHILHELFDPSTEKSSTKIRLHDLCYHNEDFIRSHIIKTNTTYPSITSSKSSSAIYVTMNGKQILIKNGIVFTGKGFKKSLRLKVLDINYFNSFCDYFPKGSKFMILYIEDSMFGSFDPNVPVSMQSREMDEIKIEPTLKKDQQFHDITFEKLLRSFPLLSNAVSDKFYKLFHHNNYQFRLLRTNTRKKLSSIKFEFQSMLDEAFKVVSDSVKIDTPDSEQTYHLINYILRLYPGLDLNRLVHEYVELNLYDKLWAQLIFQFDFPDNDKQNDDSDAIKILTKEKYDHLACISLNQLDVPTDKPWHINELHKRIYKAIDEFSKLSDASILNSSGKTQILKNTVNILTNNVKQISEIESMTEKTGSDGITVNADILIGLLIMVIVHARVDNLEAHLYYIKHFNSVDYTNDGYFCYILSNFDAVIYHLSSSMNDEPQYAGLVKSSALNHKFWSLIDSGDTDNLLVLLDEVQQGLGDSKLPNNHFLNSRTVQGESCLMMAVKADNSDAFNYIINYNYQWFSIDDILFDKNTTTNQSLLTVALTQESYNIITQLVEIILSNTTLEEQILYFNSVDNSGRSAGHYFHHSPNLIDQIGFLIDWELKDLNSHTPLFSLCRCYDHPDYATLLEKGFDCIYKKYGKESIDFDKHIDKMGNTLLHIILKDLSKTKLLTSETNLINVNQLNYKNLTPLDLYVKYNRLENLKELLKDDRLDFKFEDSTNFYSVFDFLGSSTAKSPTNTVLKEIEKLIYNYCFINYYPNTDTEKIAALNARFDTTKKDWALFFIKSNKIPTLNAETLDRLRKFTYIFKLDHTHSFFPDNETFWLNFPQEKSMVPIFAKFRINRIIEHVNMYMISLNFHPILTNEKIFENFFVKNRNKSTLELINDITNRQESDKRKFSNLVLGIAQVNEIDFFLRFSLTDLVNFQTTIAKFNKLVAISDIKQSDLRIVTDRMFNCLFSSNILPSVLLREYNFALTNQYKNQDSSYKELLTFTAWLELSTIELTKNIRRILLKLDDWKELHKNIKELNIELTKYEEDAPTRYATVVRDSTTEADTTDTTDATDATHASPNLANSTNGNLQQAHQLEAEAEEIADTSSSFFSFASIIENKKARYKKLLLMKAEEIKKIMKLNAELKFDHECIAAEISNFLKFKSNFINLGIKRYVRLSLCLSKIRKYELTKLLNSCKR.

One can recognise a VPS9 domain in the interval 323 to 487; the sequence is QNDDSDAIKI…LSSSMNDEPQ (165 aa). The tract at residues 1097–1124 is disordered; the sequence is STTEADTTDTTDATDATHASPNLANSTN. The segment covering 1100–1115 has biased composition (low complexity); it reads EADTTDTTDATDATHA.

It belongs to the UPF0507 family.

The sequence is that of UPF0507 protein DEHA2G04334g from Debaryomyces hansenii (strain ATCC 36239 / CBS 767 / BCRC 21394 / JCM 1990 / NBRC 0083 / IGC 2968) (Yeast).